A 731-amino-acid chain; its full sequence is RNA-binding protein RMD9-like, mitochondrial (731 aa).

Polar residues predominate over residues 1–10 (MIRLAQQTQV). 3 disordered regions span residues 1 to 29 (MIRL…NSLT), 77 to 133 (GGNI…GNSI), and 590 to 630 (QNDR…FNNP). Low complexity predominate over residues 83 to 100 (NNNNHLAQNNSNNSNNHH). Residues 101–122 (NNNRNHHHNNNRNHHQNNHNHS) show a composition bias toward basic residues. At Ser-132 the chain carries Phosphoserine. Polar residues predominate over residues 598 to 617 (SNMNSTQISRTATPSPSLTP).

This sequence belongs to the RMD9 family. As to quaternary structure, monomer. In terms of processing, phosphorylated. Phosphorylation promotes binding to RNA.

It is found in the mitochondrion inner membrane. Its function is as follows. May be involved in the processing or stability of mitochondrial mRNAs. This chain is RNA-binding protein RMD9-like, mitochondrial, found in Saccharomyces cerevisiae (strain ATCC 204508 / S288c) (Baker's yeast).